A 305-amino-acid polypeptide reads, in one-letter code: Glycine--tRNA ligase alpha subunit (305 aa).

Belongs to the class-II aminoacyl-tRNA synthetase family. Tetramer of two alpha and two beta subunits.

Its subcellular location is the cytoplasm. The catalysed reaction is tRNA(Gly) + glycine + ATP = glycyl-tRNA(Gly) + AMP + diphosphate. The polypeptide is Glycine--tRNA ligase alpha subunit (Janthinobacterium sp. (strain Marseille) (Minibacterium massiliensis)).